Consider the following 249-residue polypeptide: 2,3-bisphosphoglycerate-dependent phosphoglycerate mutase (249 aa).

Substrate-binding positions include 8–15 (RHGESQWN), 21–22 (TG), R60, 87–90 (ERHY), K98, 114–115 (RR), and 183–184 (GN). H9 (tele-phosphohistidine intermediate) is an active-site residue. The Proton donor/acceptor role is filled by E87.

The protein belongs to the phosphoglycerate mutase family. BPG-dependent PGAM subfamily.

It carries out the reaction (2R)-2-phosphoglycerate = (2R)-3-phosphoglycerate. The protein operates within carbohydrate degradation; glycolysis; pyruvate from D-glyceraldehyde 3-phosphate: step 3/5. Functionally, catalyzes the interconversion of 2-phosphoglycerate and 3-phosphoglycerate. This chain is 2,3-bisphosphoglycerate-dependent phosphoglycerate mutase, found in Pelodictyon phaeoclathratiforme (strain DSM 5477 / BU-1).